Consider the following 260-residue polypeptide: Cytochrome c oxidase subunit 2 (260 aa).

The Mitochondrial intermembrane segment spans residues 1–43; it reads MILRSLSCRFLTIALCDAAEPWQLGFQDAATPMMQGIIDLHHD. Residues 44–64 traverse the membrane as a helical segment; the sequence is IFFFLILILVFVLWMLVRALW. The Mitochondrial matrix segment spans residues 65–84; sequence HFNEQTNPIPQRIVHGTTIE. Residues 85–105 form a helical membrane-spanning segment; sequence IIWTIFPSVILLFIAIPSFAL. The Mitochondrial intermembrane portion of the chain corresponds to 106–260; the sequence is LYSMDGVLVD…VSNQLILQTN (155 aa). Cu cation-binding residues include His-189, Cys-224, Glu-226, Cys-228, His-232, and Met-235. Glu-226 provides a ligand contact to Mg(2+).

The protein belongs to the cytochrome c oxidase subunit 2 family. In terms of assembly, component of the cytochrome c oxidase (complex IV, CIV), a multisubunit enzyme composed of a catalytic core of 3 subunits and several supernumerary subunits. The complex exists as a monomer or a dimer and forms supercomplexes (SCs) in the inner mitochondrial membrane with ubiquinol-cytochrome c oxidoreductase (cytochrome b-c1 complex, complex III, CIII). The cofactor is Cu cation.

The protein resides in the mitochondrion inner membrane. The enzyme catalyses 4 Fe(II)-[cytochrome c] + O2 + 8 H(+)(in) = 4 Fe(III)-[cytochrome c] + 2 H2O + 4 H(+)(out). Its function is as follows. Component of the cytochrome c oxidase, the last enzyme in the mitochondrial electron transport chain which drives oxidative phosphorylation. The respiratory chain contains 3 multisubunit complexes succinate dehydrogenase (complex II, CII), ubiquinol-cytochrome c oxidoreductase (cytochrome b-c1 complex, complex III, CIII) and cytochrome c oxidase (complex IV, CIV), that cooperate to transfer electrons derived from NADH and succinate to molecular oxygen, creating an electrochemical gradient over the inner membrane that drives transmembrane transport and the ATP synthase. Cytochrome c oxidase is the component of the respiratory chain that catalyzes the reduction of oxygen to water. Electrons originating from reduced cytochrome c in the intermembrane space (IMS) are transferred via the dinuclear copper A center (CU(A)) of subunit 2 and heme A of subunit 1 to the active site in subunit 1, a binuclear center (BNC) formed by heme A3 and copper B (CU(B)). The BNC reduces molecular oxygen to 2 water molecules using 4 electrons from cytochrome c in the IMS and 4 protons from the mitochondrial matrix. This chain is Cytochrome c oxidase subunit 2 (COX2), found in Triticum aestivum (Wheat).